A 299-amino-acid chain; its full sequence is 4-hydroxy-tetrahydrodipicolinate synthase (299 aa).

Position 47 (Thr47) interacts with pyruvate. Tyr136 functions as the Proton donor/acceptor in the catalytic mechanism. The active-site Schiff-base intermediate with substrate is the Lys164. Ala205 provides a ligand contact to pyruvate.

It belongs to the DapA family. Homotetramer; dimer of dimers.

It localises to the cytoplasm. It carries out the reaction L-aspartate 4-semialdehyde + pyruvate = (2S,4S)-4-hydroxy-2,3,4,5-tetrahydrodipicolinate + H2O + H(+). The protein operates within amino-acid biosynthesis; L-lysine biosynthesis via DAP pathway; (S)-tetrahydrodipicolinate from L-aspartate: step 3/4. Its function is as follows. Catalyzes the condensation of (S)-aspartate-beta-semialdehyde [(S)-ASA] and pyruvate to 4-hydroxy-tetrahydrodipicolinate (HTPA). The sequence is that of 4-hydroxy-tetrahydrodipicolinate synthase from Pediococcus pentosaceus (strain ATCC 25745 / CCUG 21536 / LMG 10740 / 183-1w).